A 412-amino-acid chain; its full sequence is Peptidase T (412 aa).

Residue histidine 84 participates in Zn(2+) binding. Residue aspartate 86 is part of the active site. Aspartate 146 is a Zn(2+) binding site. The active-site Proton acceptor is the glutamate 179. Positions 180, 202, and 385 each coordinate Zn(2+).

Belongs to the peptidase M20B family. The cofactor is Zn(2+).

The protein localises to the cytoplasm. The enzyme catalyses Release of the N-terminal residue from a tripeptide.. Functionally, cleaves the N-terminal amino acid of tripeptides. The polypeptide is Peptidase T (Haemophilus influenzae (strain PittEE)).